Consider the following 461-residue polypeptide: tRNA modification GTPase MnmE (461 aa).

Residues Lys-32, Glu-89, and Lys-128 each coordinate (6S)-5-formyl-5,6,7,8-tetrahydrofolate. The 164-residue stretch at 224-387 folds into the TrmE-type G domain; it reads GHALSIVGKP…LGQKISAFFP (164 aa). Asn-234 contributes to the K(+) binding site. GTP contacts are provided by residues 234–239, 253–259, and 278–281; these read NAGKSS, SDIKGTT, and DTAG. Ser-238 is a binding site for Mg(2+). Positions 253, 255, and 258 each coordinate K(+). Thr-259 is a Mg(2+) binding site. A (6S)-5-formyl-5,6,7,8-tetrahydrofolate-binding site is contributed by Lys-461.

Belongs to the TRAFAC class TrmE-Era-EngA-EngB-Septin-like GTPase superfamily. TrmE GTPase family. Homodimer. Heterotetramer of two MnmE and two MnmG subunits. It depends on K(+) as a cofactor.

It localises to the cytoplasm. In terms of biological role, exhibits a very high intrinsic GTPase hydrolysis rate. Involved in the addition of a carboxymethylaminomethyl (cmnm) group at the wobble position (U34) of certain tRNAs, forming tRNA-cmnm(5)s(2)U34. In Helicobacter pylori (strain HPAG1), this protein is tRNA modification GTPase MnmE.